A 234-amino-acid polypeptide reads, in one-letter code: Leucyl/phenylalanyl-tRNA--protein transferase (234 aa).

Belongs to the L/F-transferase family.

It localises to the cytoplasm. The enzyme catalyses N-terminal L-lysyl-[protein] + L-leucyl-tRNA(Leu) = N-terminal L-leucyl-L-lysyl-[protein] + tRNA(Leu) + H(+). The catalysed reaction is N-terminal L-arginyl-[protein] + L-leucyl-tRNA(Leu) = N-terminal L-leucyl-L-arginyl-[protein] + tRNA(Leu) + H(+). It carries out the reaction L-phenylalanyl-tRNA(Phe) + an N-terminal L-alpha-aminoacyl-[protein] = an N-terminal L-phenylalanyl-L-alpha-aminoacyl-[protein] + tRNA(Phe). Functions in the N-end rule pathway of protein degradation where it conjugates Leu, Phe and, less efficiently, Met from aminoacyl-tRNAs to the N-termini of proteins containing an N-terminal arginine or lysine. The protein is Leucyl/phenylalanyl-tRNA--protein transferase of Shigella boydii serotype 18 (strain CDC 3083-94 / BS512).